The following is a 578-amino-acid chain: Asparagine synthetase [glutamine-hydrolyzing] 2 (578 aa).

C2 (for GATase activity) is an active-site residue. One can recognise a Glutamine amidotransferase type-2 domain in the interval 2–185 (CGILAVLGCI…PGHIYSSKQG (184 aa)). L-glutamine is bound by residues 50–54 (RLAII), 75–77 (NGE), and D98. The region spanning 210–450 (LRNAFEKAVI…LPKHILYRQK (241 aa)) is the Asparagine synthetase domain. ATP-binding positions include L231, I267, and 341 to 342 (SG).

As to expression, expressed in the vascular region adjacent to leaf mesophyll cells in the companion cell-sieve tube element complex.

It carries out the reaction L-aspartate + L-glutamine + ATP + H2O = L-asparagine + L-glutamate + AMP + diphosphate + H(+). Its pathway is amino-acid biosynthesis; L-asparagine biosynthesis. Essential for nitrogen assimilation, distribution and remobilization within the plant via the phloem. The protein is Asparagine synthetase [glutamine-hydrolyzing] 2 (ASN2) of Arabidopsis thaliana (Mouse-ear cress).